The primary structure comprises 369 residues: Homoserine O-acetyltransferase (369 aa).

In terms of domain architecture, AB hydrolase-1 spans 44-350 (NAILVAHAWT…AYGHDAFLLE (307 aa)). The active-site Nucleophile is Ser-150. Position 217 (Arg-217) interacts with substrate. Catalysis depends on residues Asp-311 and His-344. Asp-345 serves as a coordination point for substrate.

The protein belongs to the AB hydrolase superfamily. MetX family. In terms of assembly, homodimer.

It localises to the cytoplasm. It catalyses the reaction L-homoserine + acetyl-CoA = O-acetyl-L-homoserine + CoA. Its pathway is amino-acid biosynthesis; L-methionine biosynthesis via de novo pathway; O-acetyl-L-homoserine from L-homoserine: step 1/1. Transfers an acetyl group from acetyl-CoA to L-homoserine, forming acetyl-L-homoserine. This is Homoserine O-acetyltransferase from Geobacter metallireducens (strain ATCC 53774 / DSM 7210 / GS-15).